The primary structure comprises 137 residues: Large ribosomal subunit protein uL16 (137 aa).

The span at 1–17 shows a compositional bias: basic residues; sequence MLSPKRVKFRKRQRGRL. The segment at 1–24 is disordered; that stretch reads MLSPKRVKFRKRQRGRLKGTDERG.

It belongs to the universal ribosomal protein uL16 family. In terms of assembly, part of the 50S ribosomal subunit.

Its function is as follows. Binds 23S rRNA and is also seen to make contacts with the A and possibly P site tRNAs. The chain is Large ribosomal subunit protein uL16 from Leptospira borgpetersenii serovar Hardjo-bovis (strain JB197).